The primary structure comprises 93 residues: Integration host factor subunit beta (93 aa).

Belongs to the bacterial histone-like protein family. In terms of assembly, heterodimer of an alpha and a beta chain.

Functionally, this protein is one of the two subunits of integration host factor, a specific DNA-binding protein that functions in genetic recombination as well as in transcriptional and translational control. This is Integration host factor subunit beta from Cereibacter sphaeroides (strain KD131 / KCTC 12085) (Rhodobacter sphaeroides).